We begin with the raw amino-acid sequence, 1574 residues long: Myosin-2 (1574 aa).

Ser2 bears the N-acetylserine mark. The region spanning 4 to 57 is the Myosin N-terminal SH3-like domain; sequence EVGTRCWYPHKELGWIGAEVIKNEFNDGKYHLELQLEDDEIVSVDTKDLNNDKD. The Myosin motor domain occupies 70–781; sequence EATEDLTSLS…MLAYLEKLRS (712 aa). 164–171 is an ATP binding site; the sequence is GESGAGKT. The interval 443-523 is actin-binding; the sequence is FIGVLDIYGF…LGILSLLDEE (81 aa). 6 IQ domains span residues 784–806, 807–831, 832–855, 856–879, 880–902, and 903–932; these read MHNS…QYLQ, ISQA…NDEM, KVNC…VFSV, LRTI…KQEH, EYNA…RFLR, and TKKD…DAKS. The stretch at 933–1088 forms a coiled coil; that stretch reads VNHLKEVSYK…RLQTAMSLGT (156 aa). The interval 1087–1574 is non alpha-helical, tail domain; it reads GTVTTSVLPQ…VAQQVVQDGH (488 aa). Thr1097 carries the phosphothreonine modification. Ser1121 is subject to Phosphoserine. In terms of domain architecture, Dilute spans 1226–1501; sequence AQVLTTIQKV…LRYVADIVKK (276 aa).

It belongs to the TRAFAC class myosin-kinesin ATPase superfamily. Myosin family. As to quaternary structure, homodimer. Interacts with calmodulin (CMD1) and the myosin light chain MLC1 through its IQ repeats. Binds to the membrane receptors SEC4 and VAC17 to transport secretory vesicles and the vacuole, respectively. Binds to KAR9, which transports BIM1-coated cytoplasmic microtubules that are attached to the spindle pole body into the emerging bud, thereby correctly orienting the mitotic spindle. Interacts with YPT11 and MMR1 to accelerate mitochondrial distribution to the bud. Interacts with SHE4 and localizes it to the bud tip. Interacts with RHO3 and SMY1, putative regulators of MYO2 function. Interacts with SRO7.

It localises to the bud neck. The protein localises to the bud tip. Myosin heavy chain that is required for the cell cycle-regulated transport of various organelles and proteins for their segregation. Functions by binding with its tail domain to receptor proteins on organelles and exerting force with its N-terminal motor domain against actin filaments, thereby transporting its cargo along polarized actin cables. Essential for the delivery of secretory vesicles to sites of active growth during bud emergence and cytokinesis. Required for segregation and inheritance of peroxisomes, late Golgi compartments, mitochondria and the vacuole to the daughter cell during cell division. Also required for correct alignment of the spindle during mitosis. The chain is Myosin-2 (MYO2) from Saccharomyces cerevisiae (strain ATCC 204508 / S288c) (Baker's yeast).